The following is a 1041-amino-acid chain: MALRSDYEHGRADSYRVATVIATDDDNRTADGQYKSRRKMPAKVNKKENLDDLKQELDIDFHKISPEELYQRFQTHPENGLSHAKAKENLERDGPNALTPPKQTPEWVKFCKNLFGGFAMLLWIGAILCFVAYSIQASTSEEPADDNLYLGIVLSAVVIVTGIFSYYQESKSSKIMESFKNMVPQFATVIREGEKLTLRAEDLVLGDVVEVKFGDRIPADIRIIEARNFKVDNSSLTGESEPQSRGAEFTHENPLETKNLAFFSTNAVEGTAKGVVISCGDHTVMGRIAGLASGLDTGETPIAKEIHHFIHLITGVAVFLGVTFFVIAFILGYHWLDAVIFLIGIIVANVPEGLLATVTVCLTLTAKRMASKNCLVKNLEAVETLGSTSTICSDKTGTLTQNRMTVAHMWFDNQIIEADTTEDQSGVQYDRTSPGFKALSRIATLCNRAEFKGGQDGVPILKKEVSGDASEAALLKCMELALGDVMNIRKRNKKIAEVPFNSTNKYQVSIHETEDTNDPRYLLVMKGAPERILERCSTIFINGKEKVLDEEMKEAFNNAYMELGGLGERVLGFCDFMLPSDKYPNGFKFNTDDINFPIDNLRFVGLMSMIDPPRAAVPDAVAKCRSAGIKVIMVTGDHPITAKAIAKSVGIISEGNETVEDIAQRLNIPVSEVNPREAKAAVVHGAELRDVSSDQLDEILRYHTEIVFARTSPQQKLIIVEGCQRMGAIVAVTGDGVNDSPALKKADIGVAMGIAGSDVSKQAADMILLDDNFASIVTGVEEGRLIFDNLKKSIAYTLTSNIPEISPFLAFILCDIPLPLGTVTILCIDLGTDMVPAISLAYEHAEADIMKRPPRDPFNDKLVNSRLISMAYGQIGMIQAAAGFFVYFVIMAENGFLPKKLFGIRKMWDSKAVNDLTDSYGQEWTYRDRKTLEYTCHTAFFISIVVVQWADLIICKTRRNSIFQQGMRNWALNFGLVFETVLAAFLSYCPGMEKGLRMYPLKLVWWFPAIPFALAIFIYDETRRFYLRRNPGGWLEQETYY.

4 helical membrane passes run 115–135 (FGGF…AYSI), 147–167 (NLYL…FSYY), 312–332 (LITG…FILG), and 338–358 (AVIF…LATV). Asp-394 functions as the 4-aspartylphosphate intermediate in the catalytic mechanism. Lys-526 provides a ligand contact to ATP. Helical transmembrane passes span 808 to 828 (FLAF…ILCI), 870 to 890 (MAYG…YFVI), 935 to 955 (TCHT…LIIC), and 970 to 990 (WALN…SYCP).

This sequence belongs to the cation transport ATPase (P-type) (TC 3.A.3) family. Type IIC subfamily. The sodium/potassium-transporting ATPase is composed of a catalytic alpha subunit, an auxiliary non-catalytic beta subunit and an additional regulatory subunit. In terms of tissue distribution, high levels are found in some adult tissues: Malpighian tubules, indirect flight muscles, tubular leg muscles and throughout the nervous system (brain, optic lobes, retina and ventral thoracic neuromere). Lower levels are detected at the posterior end where the reproductive organs and rectum are located.

It is found in the cell membrane. It carries out the reaction K(+)(out) + Na(+)(in) + ATP + H2O = K(+)(in) + Na(+)(out) + ADP + phosphate + H(+). This is the catalytic component of the active enzyme, which catalyzes the hydrolysis of ATP coupled with the exchange of sodium and potassium ions across the plasma membrane. This action creates the electrochemical gradient of sodium and potassium ions, providing the energy for active transport of various nutrients. The chain is Sodium/potassium-transporting ATPase subunit alpha (Atpalpha) from Drosophila melanogaster (Fruit fly).